Here is a 492-residue protein sequence, read N- to C-terminus: Anthranilate synthase component 1 (492 aa).

L-tryptophan-binding positions include serine 48 and 273–275 (PYM). 308–309 (GT) contacts chorismate. Residue glutamate 335 participates in Mg(2+) binding. Chorismate-binding positions include tyrosine 423, arginine 443, 457–459 (GGG), and glycine 459. A Mg(2+)-binding site is contributed by glutamate 472.

This sequence belongs to the anthranilate synthase component I family. Heterotetramer consisting of two non-identical subunits: a beta subunit (TrpG) and a large alpha subunit (TrpE). The cofactor is Mg(2+).

The enzyme catalyses chorismate + L-glutamine = anthranilate + pyruvate + L-glutamate + H(+). It functions in the pathway amino-acid biosynthesis; L-tryptophan biosynthesis; L-tryptophan from chorismate: step 1/5. Feedback inhibited by tryptophan. Functionally, part of a heterotetrameric complex that catalyzes the two-step biosynthesis of anthranilate, an intermediate in the biosynthesis of L-tryptophan. In the first step, the glutamine-binding beta subunit (TrpG) of anthranilate synthase (AS) provides the glutamine amidotransferase activity which generates ammonia as a substrate that, along with chorismate, is used in the second step, catalyzed by the large alpha subunit of AS (TrpE) to produce anthranilate. In the absence of TrpG, TrpE can synthesize anthranilate directly from chorismate and high concentrations of ammonia. The polypeptide is Anthranilate synthase component 1 (Pseudomonas aeruginosa (strain ATCC 15692 / DSM 22644 / CIP 104116 / JCM 14847 / LMG 12228 / 1C / PRS 101 / PAO1)).